Here is a 342-residue protein sequence, read N- to C-terminus: Biotin synthase (342 aa).

The 228-residue stretch at 63–290 folds into the Radical SAM core domain; sequence NTVQLSTLLS…GAMVRLSAGR (228 aa). Residues Cys-78, Cys-82, and Cys-85 each contribute to the [4Fe-4S] cluster site. Positions 122, 153, 213, and 285 each coordinate [2Fe-2S] cluster.

Belongs to the radical SAM superfamily. Biotin synthase family. As to quaternary structure, homodimer. Requires [4Fe-4S] cluster as cofactor. It depends on [2Fe-2S] cluster as a cofactor.

It carries out the reaction (4R,5S)-dethiobiotin + (sulfur carrier)-SH + 2 reduced [2Fe-2S]-[ferredoxin] + 2 S-adenosyl-L-methionine = (sulfur carrier)-H + biotin + 2 5'-deoxyadenosine + 2 L-methionine + 2 oxidized [2Fe-2S]-[ferredoxin]. It functions in the pathway cofactor biosynthesis; biotin biosynthesis; biotin from 7,8-diaminononanoate: step 2/2. In terms of biological role, catalyzes the conversion of dethiobiotin (DTB) to biotin by the insertion of a sulfur atom into dethiobiotin via a radical-based mechanism. The sequence is that of Biotin synthase from Cupriavidus pinatubonensis (strain JMP 134 / LMG 1197) (Cupriavidus necator (strain JMP 134)).